Reading from the N-terminus, the 135-residue chain is Large ribosomal subunit protein eL27x (135 aa).

The protein belongs to the eukaryotic ribosomal protein eL27 family.

This is Large ribosomal subunit protein eL27x (RPL27C) from Arabidopsis thaliana (Mouse-ear cress).